A 316-amino-acid chain; its full sequence is Short-chain dehydrogenase/reductase family 16C member 6 (316 aa).

Residue 40–64 (LITGAASGLGRLLAIKFASLGAILV) participates in NAD(+) binding. Serine 173 serves as a coordination point for substrate. Tyrosine 186 serves as the catalytic Proton acceptor.

It belongs to the short-chain dehydrogenases/reductases (SDR) family.

This is Short-chain dehydrogenase/reductase family 16C member 6 (SDR16C6) from Bos taurus (Bovine).